The chain runs to 507 residues: Branchpoint-bridging protein (507 aa).

The span at 84–93 (DLNPPTSRYR) shows a compositional bias: polar residues. The tract at residues 84-110 (DLNPPTSRYRSLSPPPVYDSQGKRTNT) is disordered. The KH domain maps to 154-220 (YIPINDYPEI…NMNEPLHCVI (67 aa)). CCHC-type zinc fingers lie at residues 272–289 (RPCP…ECSS) and 297–314 (VICQ…DCTS). The disordered stretch occupies residues 307–507 (HAARDCTSPL…PPPPPPPPSS (201 aa)). Residues 319–336 (FGKRTSDGPEFRETKKLQ) are compositionally biased toward basic and acidic residues. A compositionally biased stretch (low complexity) spans 345–376 (PVGSHPSAPGSGSANSGVAPASLHPPGTMAPP). 2 stretches are compositionally biased toward pro residues: residues 390–412 (TLPP…PVAL) and 440–449 (EGPPAPPQTA). Low complexity predominate over residues 450–469 (PPLRQTAATASSAGSSQSAQ). The segment covering 484–507 (PGPPAAVLPPPPPPPPPPPPPPSS) has biased composition (pro residues).

The protein belongs to the BBP/SF1 family.

Its subcellular location is the nucleus. Its function is as follows. Necessary for the splicing of pre-mRNA. Has a role in the recognition of the branch site (5'-UACUAAC-3'), the pyrimidine tract and the 3'-splice site at the 3'-end of introns. This Eremothecium gossypii (strain ATCC 10895 / CBS 109.51 / FGSC 9923 / NRRL Y-1056) (Yeast) protein is Branchpoint-bridging protein (BBP).